The sequence spans 508 residues: UTP--glucose-1-phosphate uridylyltransferase (508 aa).

Ser-13 is modified (phosphoserine). Residues 113 to 116 (LNGG), Lys-127, Gln-190, and Gly-222 contribute to the UTP site. Residue 115–116 (GG) participates in substrate binding. Residue Lys-127 coordinates Mg(2+). Residues His-223 and 251–253 (NID) contribute to the substrate site. 2 residues coordinate UTP: Asp-253 and Lys-396. Residue Asp-253 participates in Mg(2+) binding. Lys-396 is a catalytic residue. The residue at position 426 (Thr-426) is a Phosphothreonine. Ser-434 carries the post-translational modification Phosphoserine. Position 438 is an N6-acetyllysine (Lys-438). Phosphoserine is present on residues Ser-448 and Ser-461. The segment at 457–508 (HLTVSGDVTFGKNVSLKGTVIIIXNHGDRIDIPPGAVLENKIVSGNLRILDH) is oligomerization. The segment at 502 to 503 (NL) is critical for end-to-end subunit interaction.

This sequence belongs to the UDPGP type 1 family. As to quaternary structure, homooctamer.

The protein resides in the cytoplasm. The catalysed reaction is alpha-D-glucose 1-phosphate + UTP + H(+) = UDP-alpha-D-glucose + diphosphate. The protein operates within glycan biosynthesis; glycogen biosynthesis. Its function is as follows. UTP--glucose-1-phosphate uridylyltransferase catalyzing the conversion of glucose-1-phosphate into UDP-glucose, a crucial precursor for the production of glycogen. The polypeptide is UTP--glucose-1-phosphate uridylyltransferase (UGP2) (Sus scrofa (Pig)).